The chain runs to 360 residues: tRNA N6-adenosine threonylcarbamoyltransferase (360 aa).

Fe cation-binding residues include His115 and His119. Residues 137–141 (LVSGG), Asp170, Gly183, and Asn283 each bind substrate. Asp311 contacts Fe cation.

It belongs to the KAE1 / TsaD family. It depends on Fe(2+) as a cofactor.

It is found in the cytoplasm. It catalyses the reaction L-threonylcarbamoyladenylate + adenosine(37) in tRNA = N(6)-L-threonylcarbamoyladenosine(37) in tRNA + AMP + H(+). In terms of biological role, required for the formation of a threonylcarbamoyl group on adenosine at position 37 (t(6)A37) in tRNAs that read codons beginning with adenine. Is involved in the transfer of the threonylcarbamoyl moiety of threonylcarbamoyl-AMP (TC-AMP) to the N6 group of A37, together with TsaE and TsaB. TsaD likely plays a direct catalytic role in this reaction. The sequence is that of tRNA N6-adenosine threonylcarbamoyltransferase from Rhizobium meliloti (strain 1021) (Ensifer meliloti).